A 345-amino-acid polypeptide reads, in one-letter code: N-acetyl-gamma-glutamyl-phosphate reductase (345 aa).

The active site involves Cys-142.

This sequence belongs to the NAGSA dehydrogenase family. Type 1 subfamily.

The protein resides in the cytoplasm. It catalyses the reaction N-acetyl-L-glutamate 5-semialdehyde + phosphate + NADP(+) = N-acetyl-L-glutamyl 5-phosphate + NADPH + H(+). It functions in the pathway amino-acid biosynthesis; L-arginine biosynthesis; N(2)-acetyl-L-ornithine from L-glutamate: step 3/4. In terms of biological role, catalyzes the NADPH-dependent reduction of N-acetyl-5-glutamyl phosphate to yield N-acetyl-L-glutamate 5-semialdehyde. This chain is N-acetyl-gamma-glutamyl-phosphate reductase, found in Thermus thermophilus (strain ATCC BAA-163 / DSM 7039 / HB27).